The chain runs to 979 residues: Translation initiation factor IF-2 (979 aa).

Positions 33-391 are disordered; it reads VKSHSSTITT…TPPAEITLTE (359 aa). Low complexity-rich tracts occupy residues 54–63 and 139–150; these read QKRPQAPKAQ and AKTTSPKAEPAA. Residues 151-166 are compositionally biased toward pro residues; that stretch reads PAAPKPKLMGPPPRPT. The span at 234-252 shows a compositional bias: acidic residues; that stretch reads PELDEEPDTNNVEGDDDAT. Composition is skewed to basic residues over residues 263-278 and 294-303; these read PAAKPKKAIGPKPSKR and TKTSKLKRRP. The segment covering 314 to 328 has biased composition (polar residues); sequence GTTTNNNAEVPSVSL. Basic and acidic residues predominate over residues 371–380; that stretch reads KEQRRDRPDV. In terms of domain architecture, tr-type G spans 468-641; sequence HRPPVVTIMG…LLVSEIEELS (174 aa). The interval 477–484 is G1; it reads GHVDHGKT. 477-484 lines the GTP pocket; it reads GHVDHGKT. The segment at 502 to 506 is G2; sequence GITQH. Residues 527–530 form a G3 region; it reads DTPG. Residues 527 to 531 and 581 to 584 each bind GTP; these read DTPGH and NKMD. The interval 581 to 584 is G4; that stretch reads NKMD. Residues 617-619 form a G5 region; the sequence is SAL.

The protein belongs to the TRAFAC class translation factor GTPase superfamily. Classic translation factor GTPase family. IF-2 subfamily.

The protein localises to the cytoplasm. Functionally, one of the essential components for the initiation of protein synthesis. Protects formylmethionyl-tRNA from spontaneous hydrolysis and promotes its binding to the 30S ribosomal subunits. Also involved in the hydrolysis of GTP during the formation of the 70S ribosomal complex. The chain is Translation initiation factor IF-2 from Picosynechococcus sp. (strain ATCC 27264 / PCC 7002 / PR-6) (Agmenellum quadruplicatum).